Here is a 326-residue protein sequence, read N- to C-terminus: Putative nickel insertion protein (326 aa).

This sequence belongs to the LarC family.

In Enterococcus faecalis (strain ATCC 700802 / V583), this protein is Putative nickel insertion protein.